Reading from the N-terminus, the 563-residue chain is MSINDKALSDVERIKAESQGLRGTLRESLHNPVTGALAEDDVQVIKFHGIYQQDYRDLRAERHQQKLEPLYQFMARLRLPGGVLSGAQWLALGDIARTYGNASLRITSRQSIQFHGLLKPHLRPVLQALDRALLDTVSACGDVNRNVIASSAPQISAFHAEAYGWAQKIAEHLLPQSHAYHEIWLGGQQITAPEEDLLYGSTYLPRKFKIAIAVPPHNDVDVLTQDLGFIAIHEEGRLAGFNVCVGGGLGRSHNKPDTYSRLADVCGFCAPGQVLAIAEAVLITQRDHGDRSNRSHARLKYTVDRMGLDRFMEEVQQRTGFSLAPPRPFHFETSGDRFGWLENDDGTACLTLFIPGGRVADGDIPLLSGLDALARLHHGEIRLTCNQNLLIAGISPAERPVVETVLAEYGLNRLLNLAPVRAHAMACVALPTCPLAMAEAERYLPVFLDRIEALLAEVGLEGEALTVRMTGCPNGCARPYLAEIGLVGKAPGLYDLYLGGDRTGMRLNALYREALDEEALLDALRPLLKRFAGQRWAGETFGDFVRRQDLLPPDPGLPHTGRR.

C427, C433, C472, and C476 together coordinate [4Fe-4S] cluster. C476 provides a ligand contact to siroheme.

It belongs to the nitrite and sulfite reductase 4Fe-4S domain family. Alpha(8)-beta(8). The alpha component is a flavoprotein, the beta component is a hemoprotein. Siroheme serves as cofactor. The cofactor is [4Fe-4S] cluster.

The enzyme catalyses hydrogen sulfide + 3 NADP(+) + 3 H2O = sulfite + 3 NADPH + 4 H(+). It functions in the pathway sulfur metabolism; hydrogen sulfide biosynthesis; hydrogen sulfide from sulfite (NADPH route): step 1/1. In terms of biological role, component of the sulfite reductase complex that catalyzes the 6-electron reduction of sulfite to sulfide. This is one of several activities required for the biosynthesis of L-cysteine from sulfate. This is Sulfite reductase [NADPH] hemoprotein beta-component from Acidithiobacillus ferrooxidans (strain ATCC 53993 / BNL-5-31) (Leptospirillum ferrooxidans (ATCC 53993)).